The sequence spans 845 residues: Probable inorganic carbon transporter subunit DabA (845 aa).

Positions 1–20 are disordered; that stretch reads MPMASGDESMSARSENPVQS. Residues Cys345, Asp347, His516, and Cys531 each contribute to the Zn(2+) site.

The protein belongs to the inorganic carbon transporter (TC 9.A.2) DabA family. As to quaternary structure, forms a complex with DabB. Requires Zn(2+) as cofactor.

The protein resides in the cell inner membrane. Functionally, part of an energy-coupled inorganic carbon pump. This Azotobacter vinelandii (strain DJ / ATCC BAA-1303) protein is Probable inorganic carbon transporter subunit DabA.